We begin with the raw amino-acid sequence, 339 residues long: NADH-quinone oxidoreductase subunit H (339 aa).

The next 8 helical transmembrane spans lie at 19–39 (LLKIIAIVGPLMGAVAYLTLA), 87–107 (FLLGPVLAIAPALAAWAVVPF), 120–140 (LLYILAMTSVGVYGVIIAGWA), 153–173 (SAAQIVSYEIAMGFALVGVLM), 191–211 (FWEWYWLPLFPLFIVYFISAV), 253–273 (ILVAMLAALMFLGGWLSPVPF), 275–295 (PDSILWLLFKVAALLFFFLWF), and 310–330 (LGWKVFIPVTLVWILFVGAMM).

This sequence belongs to the complex I subunit 1 family. In terms of assembly, NDH-1 is composed of 14 different subunits. Subunits NuoA, H, J, K, L, M, N constitute the membrane sector of the complex.

Its subcellular location is the cell inner membrane. The enzyme catalyses a quinone + NADH + 5 H(+)(in) = a quinol + NAD(+) + 4 H(+)(out). NDH-1 shuttles electrons from NADH, via FMN and iron-sulfur (Fe-S) centers, to quinones in the respiratory chain. The immediate electron acceptor for the enzyme in this species is believed to be ubiquinone. Couples the redox reaction to proton translocation (for every two electrons transferred, four hydrogen ions are translocated across the cytoplasmic membrane), and thus conserves the redox energy in a proton gradient. This subunit may bind ubiquinone. In Methylobacillus flagellatus (strain ATCC 51484 / DSM 6875 / VKM B-1610 / KT), this protein is NADH-quinone oxidoreductase subunit H.